The following is a 123-amino-acid chain: Gamma-synuclein (123 aa).

Repeat copies occupy residues Glu20 to Ala30 and Glu31 to Gly41. Residues Glu20–Ser67 form a 4 X 11 AA tandem repeats of [EGSA]-K-T-K-[EQ]-[GQ]-V-X(4) region. One copy of the 3; approximate repeat lies at Thr42–Ala56. Repeat 4 spans residues Glu57–Ser67. 2 positions are modified to phosphoserine: Ser67 and Ser72. The tract at residues Thr91–Asp123 is disordered. Positions Gln107–Asp123 are enriched in basic and acidic residues. At Ser120 the chain carries Phosphoserine; by BARK1, CaMK2 and CK2.

This sequence belongs to the synuclein family. In terms of assembly, may be a centrosome-associated protein. Interacts with MYOC; affects its secretion and its aggregation. In terms of processing, phosphorylated. Phosphorylation by GRK5 appears to occur on residues distinct from the residue phosphorylated by other kinases. In terms of tissue distribution, highly expressed in brain, particularly in the substantia nigra. Also expressed in the corpus callosum, heart, skeletal muscle, ovary, testis, colon and spleen. Weak expression in pancreas, kidney and lung. Expressed predominantly in the cell bodies and axons of primary sensory neurons, sympathetic neurons and motoneurons.

It is found in the cytoplasm. The protein resides in the perinuclear region. Its subcellular location is the cytoskeleton. The protein localises to the microtubule organizing center. It localises to the centrosome. It is found in the spindle. Its function is as follows. Plays a role in neurofilament network integrity. May be involved in modulating axonal architecture during development and in the adult. In vitro, increases the susceptibility of neurofilament-H to calcium-dependent proteases. May also function in modulating the keratin network in skin. Activates the MAPK and Elk-1 signal transduction pathway. The polypeptide is Gamma-synuclein (Sncg) (Mus musculus (Mouse)).